A 156-amino-acid polypeptide reads, in one-letter code: Small ribosomal subunit protein uS7 (156 aa).

This sequence belongs to the universal ribosomal protein uS7 family. Part of the 30S ribosomal subunit. Contacts proteins S9 and S11.

Functionally, one of the primary rRNA binding proteins, it binds directly to 16S rRNA where it nucleates assembly of the head domain of the 30S subunit. Is located at the subunit interface close to the decoding center, probably blocks exit of the E-site tRNA. The protein is Small ribosomal subunit protein uS7 of Leuconostoc citreum (strain KM20).